The primary structure comprises 61 residues: Ubiquinol-cytochrome c reductase complex assembly factor 6 (61 aa).

Over 1 to 9 the chain is Mitochondrial matrix; the sequence is MPAGVSWGQ. A helical membrane pass occupies residues 10–32; that stretch reads YLKFLGCALASMMAGSQAVHLYY. Residues 33-61 are Mitochondrial intermembrane-facing; sequence KPLEDLRVYIEQEQHSTQVDPTAKPPESA.

It belongs to the UQCC6 family. Interacts with sloth1; the interaction stabilizes both components. As to expression, expressed in the brain.

The protein resides in the mitochondrion inner membrane. It localises to the mitochondrion. In terms of biological role, required for the assembly and stability of the mitochondrial ubiquinol-cytochrome c reductase complex (complex III (CIII) or cytochrome b-c1 complex), a multisubunit transmembrane complex that is part of the mitochondrial electron transport chain (ETC) which drives oxidative phosphorylation. The polypeptide is Ubiquinol-cytochrome c reductase complex assembly factor 6 (Drosophila melanogaster (Fruit fly)).